A 233-amino-acid chain; its full sequence is MDTGVSSPRVLVVDDDSDVLASLERGLRLSGFEVSTAIDGAEALRNATETRPDAIVLDINMPVLDGVSVVTALRAMDNDVPVCVLSARSSVDDRVAGLEAGADDYLVKPFVLAELVARVKALLRRRGATATSSSETIAVGPLEVDIPGRRARVNGVDVDLTKREFDLLAVLAEHKTTVLSRAQLLELVWGYDFAADTNVVDVFIGYLRRKLEANSGPRLLHTVRGVGFVLRMQ.

Residues 9-123 (RVLVVDDDSD…ELVARVKALL (115 aa)) enclose the Response regulatory domain. D58 bears the 4-aspartylphosphate mark. The segment at residues 134–232 (SETIAVGPLE…VRGVGFVLRM (99 aa)) is a DNA-binding region (ompR/PhoB-type).

In terms of processing, phosphorylated by PrrB at Asp-58.

It is found in the cytoplasm. In terms of biological role, member of the two-component regulatory system PrrB/PrrA that is involved specifically in early intracellular multiplication of Mycobacterium and is essential for its viability. Upon phosphorylation by PrrB, functions as a transcription regulator by direct binding to promoter regions of target genes to positively regulate their expression. Autoregulates its own expression. The polypeptide is Transcriptional regulatory protein PrrA (prrA) (Mycobacterium leprae (strain TN)).